The following is a 330-amino-acid chain: MQPQSVLHSGYFHPLLRAWQTATTTLNASNLIYPIFVTDVPDDIQPIASLPGVARYGVNRLEEMLRPLVEEGLRCVLIFGVPSRVPKDERGSAADSEESPAIEAIHLLRKTFPNLLVACDVCLCPYTSHGHCGLLSENGAFQAEESRQRLAEVALAYAKAGCQVVAPSDMMDGRVEAIKETLMAHGLGSRVSVMSYSAKFASCFYGPFRDAAKSSPAFGDRRCYQLPPGARGLALRAVDRDVREGADMLMVKPGMPYLDIVREVKDKHPDLPLAVYHVSGEFAMLWHGAQAGAFDLKAAVLEAMTAFRRAGADIIITHYTPQLLQWLKEE.

Residues Cys122, Cys124, His131, and Cys132 each contribute to the Zn(2+) site. Lys199 serves as the catalytic Schiff-base intermediate with substrate. N6-succinyllysine is present on Lys199. A 5-aminolevulinate-binding site is contributed by Arg209. Residue Ser215 is modified to Phosphoserine. Arg221 is a 5-aminolevulinate binding site. Position 223 (Cys223) interacts with Zn(2+). Residue Lys252 is the Schiff-base intermediate with substrate of the active site. An N6-succinyllysine modification is found at Lys252. Ser279 contributes to the 5-aminolevulinate binding site.

It belongs to the ALAD family. In terms of assembly, homooctamer; active form. Homohexamer; low activity form. Requires Zn(2+) as cofactor.

The protein resides in the cytoplasm. It is found in the cytosol. It catalyses the reaction 2 5-aminolevulinate = porphobilinogen + 2 H2O + H(+). It functions in the pathway porphyrin-containing compound metabolism; protoporphyrin-IX biosynthesis; coproporphyrinogen-III from 5-aminolevulinate: step 1/4. Can alternate between a fully active homooctamer and a low-activity homohexamer. A bound magnesium ion may promote the assembly of the fully active homooctamer. The magnesium-binding site is absent in the low-activity homohexamer. Inhibited by compounds that favor the hexameric state. Inhibited by divalent lead ions. The lead ions partially displace the zinc cofactor. Its function is as follows. Catalyzes an early step in the biosynthesis of tetrapyrroles. Binds two molecules of 5-aminolevulinate per subunit, each at a distinct site, and catalyzes their condensation to form porphobilinogen. This Pongo abelii (Sumatran orangutan) protein is Delta-aminolevulinic acid dehydratase (ALAD).